Reading from the N-terminus, the 325-residue chain is Lipoyl synthase (325 aa).

Residues 1–31 (MASDSDLLDTKPAETRHPEKAHRPDQPTLRK) form a disordered region. The segment covering 8–31 (LDTKPAETRHPEKAHRPDQPTLRK) has biased composition (basic and acidic residues). Residues cysteine 61, cysteine 66, cysteine 72, cysteine 87, cysteine 91, cysteine 94, and serine 300 each contribute to the [4Fe-4S] cluster site. A Radical SAM core domain is found at 73-289 (WAKKHATFMI…AEIGRAKGFL (217 aa)).

Belongs to the radical SAM superfamily. Lipoyl synthase family. The cofactor is [4Fe-4S] cluster.

The protein resides in the cytoplasm. The catalysed reaction is [[Fe-S] cluster scaffold protein carrying a second [4Fe-4S](2+) cluster] + N(6)-octanoyl-L-lysyl-[protein] + 2 oxidized [2Fe-2S]-[ferredoxin] + 2 S-adenosyl-L-methionine + 4 H(+) = [[Fe-S] cluster scaffold protein] + N(6)-[(R)-dihydrolipoyl]-L-lysyl-[protein] + 4 Fe(3+) + 2 hydrogen sulfide + 2 5'-deoxyadenosine + 2 L-methionine + 2 reduced [2Fe-2S]-[ferredoxin]. It participates in protein modification; protein lipoylation via endogenous pathway; protein N(6)-(lipoyl)lysine from octanoyl-[acyl-carrier-protein]: step 2/2. Functionally, catalyzes the radical-mediated insertion of two sulfur atoms into the C-6 and C-8 positions of the octanoyl moiety bound to the lipoyl domains of lipoate-dependent enzymes, thereby converting the octanoylated domains into lipoylated derivatives. The chain is Lipoyl synthase from Methylocella silvestris (strain DSM 15510 / CIP 108128 / LMG 27833 / NCIMB 13906 / BL2).